We begin with the raw amino-acid sequence, 268 residues long: Tryptophan synthase alpha chain (268 aa).

Catalysis depends on proton acceptor residues glutamate 49 and aspartate 60.

The protein belongs to the TrpA family. As to quaternary structure, tetramer of two alpha and two beta chains.

The enzyme catalyses (1S,2R)-1-C-(indol-3-yl)glycerol 3-phosphate + L-serine = D-glyceraldehyde 3-phosphate + L-tryptophan + H2O. The protein operates within amino-acid biosynthesis; L-tryptophan biosynthesis; L-tryptophan from chorismate: step 5/5. Functionally, the alpha subunit is responsible for the aldol cleavage of indoleglycerol phosphate to indole and glyceraldehyde 3-phosphate. In Escherichia coli (strain 55989 / EAEC), this protein is Tryptophan synthase alpha chain.